Consider the following 353-residue polypeptide: S-adenosylmethionine:tRNA ribosyltransferase-isomerase (353 aa).

This sequence belongs to the QueA family. Monomer.

The protein resides in the cytoplasm. The catalysed reaction is 7-aminomethyl-7-carbaguanosine(34) in tRNA + S-adenosyl-L-methionine = epoxyqueuosine(34) in tRNA + adenine + L-methionine + 2 H(+). It participates in tRNA modification; tRNA-queuosine biosynthesis. Its function is as follows. Transfers and isomerizes the ribose moiety from AdoMet to the 7-aminomethyl group of 7-deazaguanine (preQ1-tRNA) to give epoxyqueuosine (oQ-tRNA). This is S-adenosylmethionine:tRNA ribosyltransferase-isomerase from Burkholderia vietnamiensis (strain G4 / LMG 22486) (Burkholderia cepacia (strain R1808)).